A 450-amino-acid polypeptide reads, in one-letter code: tRNA modification GTPase MnmE (450 aa).

Positions 23, 79, and 118 each coordinate (6S)-5-formyl-5,6,7,8-tetrahydrofolate. The TrmE-type G domain maps to 214–374; sequence GITLILVGKP…LKEHILNKVG (161 aa). Residue Asn224 participates in K(+) binding. GTP contacts are provided by residues 224 to 229, 243 to 249, and 268 to 271; these read NAGKSS, TSIAGTT, and DTAG. Mg(2+) is bound at residue Ser228. Thr243, Ile245, and Thr248 together coordinate K(+). Thr249 is a binding site for Mg(2+). Residue Lys450 participates in (6S)-5-formyl-5,6,7,8-tetrahydrofolate binding.

Belongs to the TRAFAC class TrmE-Era-EngA-EngB-Septin-like GTPase superfamily. TrmE GTPase family. In terms of assembly, homodimer. Heterotetramer of two MnmE and two MnmG subunits. The cofactor is K(+).

Its subcellular location is the cytoplasm. Exhibits a very high intrinsic GTPase hydrolysis rate. Involved in the addition of a carboxymethylaminomethyl (cmnm) group at the wobble position (U34) of certain tRNAs, forming tRNA-cmnm(5)s(2)U34. This is tRNA modification GTPase MnmE from Francisella tularensis subsp. tularensis (strain FSC 198).